We begin with the raw amino-acid sequence, 112 residues long: Putative pterin-4-alpha-carbinolamine dehydratase (112 aa).

It belongs to the pterin-4-alpha-carbinolamine dehydratase family.

It catalyses the reaction (4aS,6R)-4a-hydroxy-L-erythro-5,6,7,8-tetrahydrobiopterin = (6R)-L-erythro-6,7-dihydrobiopterin + H2O. The chain is Putative pterin-4-alpha-carbinolamine dehydratase from Shewanella loihica (strain ATCC BAA-1088 / PV-4).